The chain runs to 270 residues: Interleukin-33 (270 aa).

The interval 1–65 is homeodomain-like HTH domain; sequence MKPKMKYSTN…EACYFRRETT (65 aa). Residues 1 to 94 constitute a propeptide that is removed on maturation; it reads MKPKMKYSTN…CQQQSTVECF (94 aa). Residues 64-111 form an interaction with RELA region; that stretch reads TTKRPSLKTGRKHKRHLVLAACQQQSTVECFAFGISGVQKYTRALHDS.

The protein belongs to the IL-1 family. Highly divergent. In terms of assembly, forms a 1:1:1 heterotrimeric complex with its primary high-affinity receptor IL1RL1 and the coreceptor IL1RAP. Interacts with cargo receptor TMED10; the interaction mediates the translocation from the cytoplasm into the ERGIC (endoplasmic reticulum-Golgi intermediate compartment) and thereby secretion. As to quaternary structure, (Microbial infection) Interacts (in reduced form) with H.polygyrus ARI. The full-length protein can be released from cells and is able to signal via the IL1RL1/ST2 receptor. However, proteolytic processing by CELA1, CSTG/cathepsin G and ELANE/neutrophil elastase produces C-terminal peptides that are more active than the unprocessed full length protein. May also be proteolytically processed by calpains. Proteolytic cleavage mediated by apoptotic caspases including CASP3 and CASP7 results in IL33 inactivation. In vitro proteolytic cleavage by CASP1 was reported but could not be confirmed in vivo suggesting that IL33 is probably not a direct substrate for that caspase. As to expression, expressed at high level in high endothelial venules found in tonsils, Peyer patches and mesenteric lymph nodes. Almost undetectable in placenta.

It is found in the nucleus. The protein resides in the chromosome. Its subcellular location is the cytoplasm. The protein localises to the cytoplasmic vesicle. It localises to the secretory vesicle. It is found in the secreted. In terms of biological role, cytokine that binds to and signals through the IL1RL1/ST2 receptor which in turn activates NF-kappa-B and MAPK signaling pathways in target cells. Involved in the maturation of Th2 cells inducing the secretion of T-helper type 2-associated cytokines. Also involved in activation of mast cells, basophils, eosinophils and natural killer cells. Acts as an enhancer of polarization of alternatively activated macrophages. Acts as a chemoattractant for Th2 cells, and may function as an 'alarmin', that amplifies immune responses during tissue injury. Induces rapid UCP2-dependent mitochondrial rewiring that attenuates the generation of reactive oxygen species and preserves the integrity of Krebs cycle required for persistent production of itaconate and subsequent GATA3-dependent differentiation of inflammation-resolving alternatively activated macrophages. Its function is as follows. In quiescent endothelia the uncleaved form is constitutively and abundantly expressed, and acts as a chromatin-associated nuclear factor with transcriptional repressor properties, it may sequester nuclear NF-kappaB/RELA, lowering expression of its targets. This form is rapidely lost upon angiogenic or pro-inflammatory activation. This chain is Interleukin-33, found in Homo sapiens (Human).